The following is a 110-amino-acid chain: Large ribosomal subunit protein uL22 (110 aa).

This sequence belongs to the universal ribosomal protein uL22 family. Part of the 50S ribosomal subunit.

In terms of biological role, this protein binds specifically to 23S rRNA; its binding is stimulated by other ribosomal proteins, e.g. L4, L17, and L20. It is important during the early stages of 50S assembly. It makes multiple contacts with different domains of the 23S rRNA in the assembled 50S subunit and ribosome. The globular domain of the protein is located near the polypeptide exit tunnel on the outside of the subunit, while an extended beta-hairpin is found that lines the wall of the exit tunnel in the center of the 70S ribosome. The chain is Large ribosomal subunit protein uL22 from Acinetobacter baylyi (strain ATCC 33305 / BD413 / ADP1).